The chain runs to 636 residues: Fructose-1,6-bisphosphatase class 3 (636 aa).

The protein belongs to the FBPase class 3 family. Mn(2+) is required as a cofactor.

It catalyses the reaction beta-D-fructose 1,6-bisphosphate + H2O = beta-D-fructose 6-phosphate + phosphate. Its pathway is carbohydrate biosynthesis; gluconeogenesis. The sequence is that of Fructose-1,6-bisphosphatase class 3 from Streptococcus sanguinis (strain SK36).